The chain runs to 349 residues: N-formyl peptide receptor 3 (349 aa).

The Extracellular segment spans residues 1-27 (METNFSIPLNESEEVLPEPAGHTVLWI). N-linked (GlcNAc...) asparagine glycans are attached at residues asparagine 4 and asparagine 10. Residues 28 to 50 (FSLLVHGVTFIFGVLGNGLVIWV) form a helical membrane-spanning segment. At 51 to 61 (AGFRMTRTVNT) the chain is on the cytoplasmic side. Residues 62-83 (ICYLNLALADFSFSAILPFRMV) form a helical membrane-spanning segment. Over 84–100 (SVAMREKWPFGTFLCKL) the chain is Extracellular. A disulfide bridge links cysteine 98 with cysteine 176. A helical membrane pass occupies residues 101–121 (VHVMIDINLFVSVYLITIIAL). Topologically, residues 122 to 140 (DRCICVLHPAWAQNHRTMS) are cytoplasmic. Residues 141 to 162 (LAKRVMMGLWILAIVLTLPNFI) traverse the membrane as a helical segment. The Extracellular portion of the chain corresponds to 163-205 (FWTTISTKNGDTYCIFNFPFWGDTAVERLNAFITMGKVFLILH). Residues 206 to 226 (FIIGFSMPMSIITVCYGIIAA) traverse the membrane as a helical segment. Residues 227-242 (KIHRNHMIKSSSPLRV) lie on the Cytoplasmic side of the membrane. A helical transmembrane segment spans residues 243–266 (FAAVVASFFICWFPYELIGILMAV). Residues 267 to 286 (WLKEMLLNGKYKIILVLLNP) lie on the Extracellular side of the membrane. A helical transmembrane segment spans residues 287–306 (TSSLAFFNSCLNPILYVFLG). The Cytoplasmic segment spans residues 307-349 (SNFQERLIRSLPTSLERALTEVPDSAQTSNTHTNSASPPEETE). The segment at 328 to 349 (VPDSAQTSNTHTNSASPPEETE) is disordered. Residues 331-343 (SAQTSNTHTNSAS) are compositionally biased toward polar residues.

The protein belongs to the G-protein coupled receptor 1 family.

The protein resides in the cell membrane. Its function is as follows. Low affinity receptor for N-formyl-methionyl peptides, which are powerful neutrophils chemotactic factors. Binding of FMLP to the receptor causes activation of neutrophils. This response is mediated via a G-protein that activates a phosphatidylinositol-calcium second messenger system. The chain is N-formyl peptide receptor 3 (FPR3) from Pongo pygmaeus (Bornean orangutan).